A 244-amino-acid polypeptide reads, in one-letter code: MLLLGAVLLLLALPGHDQETTTQGPGVLLPLPKGACTGWMAGIPGHPGHNGAPGRDGRDGTPGEKGEKGDPGLIGPKGDIGETGVPGAEGPRGFPGIQGRKGEPGEGAYVYRSAFSVGLETYVTIPNMPIRFTKIFYNQQNHYDGSTGKFHCNIPGLYYFAYHITVYMKDVKVSLFKKDKAMLFTYDQYQENNVDQASGSVLLHLEVGDQVWLQVYGEGERNGLYADNDNDSTFTGFLLYHDTN.

A signal peptide spans 1–18 (MLLLGAVLLLLALPGHDQ). T21 and T22 each carry an O-linked (GalNAc...) threonine glycan. At K33 the chain carries 5-hydroxylysine. C36 is modified (S-(2-succinyl)cysteine). The interval 40–101 (MAGIPGHPGH…RGFPGIQGRK (62 aa)) is disordered. The 66-residue stretch at 42-107 (GIPGHPGHNG…QGRKGEPGEG (66 aa)) folds into the Collagen-like domain. 4-hydroxyproline occurs at positions 44, 47, and 53. Residues 55 to 70 (RDGRDGTPGEKGEKGD) show a composition bias toward basic and acidic residues. A 5-hydroxylysine mark is found at K65 and K68. O-linked (Gal...) hydroxylysine; partial glycosylation is found at K65 and K68. P71 and P76 each carry 4-hydroxyproline; partial. K77 is subject to 5-hydroxylysine. O-linked (Gal...) hydroxylysine; partial glycosylation occurs at K77. At P91 the chain carries 4-hydroxyproline. Residue P95 is modified to 4-hydroxyproline; partial. 5-hydroxylysine is present on K101. K101 carries an O-linked (Gal...) hydroxylysine; partial glycan. A C1q domain is found at 108-244 (AYVYRSAFSV…TGFLLYHDTN (137 aa)).

In terms of assembly, homomultimer. Forms trimers, hexamers and 12- to 18-mers. The trimers (low molecular weight complexes / LMW) are assembled via non-covalent interactions of the collagen-like domains in a triple helix and hydrophobic interactions within the globular C1q domain. Several trimers can associate to form disulfide-linked hexamers (middle molecular weight complexes / MMW) and larger complexes (higher molecular weight / HMW). The HMW-complex assembly is also modulated by the degree of lysine hydroxylation and glycosylation. LMW, MMW and HMW complexes bind to HBEGF, MMW and HMW complexes bind to PDGFB, and HMW complex binds to FGF2. Interacts with CTRP9 via the C1q domain (heterotrimeric complex). HMW complexes are more extensively glycosylated than smaller oligomers. Hydroxylation and glycosylation of the lysine residues within the collagen-like domain of adiponectin seem to be critically involved in regulating the formation and/or secretion of HMW complexes and consequently contribute to the insulin-sensitizing activity of adiponectin in hepatocytes. Post-translationally, O-glycosylated. Not N-glycosylated. O-linked glycans on hydroxylysines consist of Glc-Gal disaccharides bound to the oxygen atom of post-translationally added hydroxyl groups. Sialylated to varying degrees depending on tissue. Thr-22 appears to be the major site of sialylation. Higher sialylation found in SGBS adipocytes than in HEK fibroblasts. Sialylation is not required neither for heterodimerization nor for secretion. Not sialylated on the glycosylated hydroxylysines. Desialylated forms are rapidly cleared from the circulation. In terms of processing, succination of Cys-36 by the Krebs cycle intermediate fumarate, which leads to S-(2-succinyl)cysteine residues, inhibits polymerization and secretion of adiponectin. Adiponectin is a major target for succination in both adipocytes and adipose tissue of diabetic mammals. It was proposed that succination of proteins is a biomarker of mitochondrial stress and accumulation of Krebs cycle intermediates in adipose tissue in diabetes and that succination of adiponectin may contribute to the decrease in plasma adiponectin in diabetes. As to expression, synthesized exclusively by adipocytes and secreted into plasma.

The protein localises to the secreted. With respect to regulation, polymerization and secretion of adiponectin is inhibited by succination of cysteine residues by the Krebs cycle intermediate fumarate, which leads to S-(2-succinyl)cysteine residues. Functionally, important adipokine involved in the control of fat metabolism and insulin sensitivity, with direct anti-diabetic, anti-atherogenic and anti-inflammatory activities. Stimulates AMPK phosphorylation and activation in the liver and the skeletal muscle, enhancing glucose utilization and fatty-acid combustion. Antagonizes TNF-alpha by negatively regulating its expression in various tissues such as liver and macrophages, and also by counteracting its effects. Inhibits endothelial NF-kappa-B signaling through a cAMP-dependent pathway. May play a role in cell growth, angiogenesis and tissue remodeling by binding and sequestering various growth factors with distinct binding affinities, depending on the type of complex, LMW, MMW or HMW. The chain is Adiponectin (ADIPOQ) from Homo sapiens (Human).